We begin with the raw amino-acid sequence, 468 residues long: Argininosuccinate synthase (468 aa).

ATP is bound by residues 10-18 and A37; that span reads AYSGGLDTS. 2 residues coordinate L-citrulline: Y90 and S95. G120 provides a ligand contact to ATP. Residues T122, N126, and D127 each contribute to the L-aspartate site. L-citrulline is bound at residue N126. Positions 130, 182, 191, 267, and 279 each coordinate L-citrulline. Low complexity predominate over residues 445-457; it reads PVAAKATAKPVKA. Residues 445-468 are disordered; sequence PVAAKATAKPVKAPVKKPIAKKKG. Residues 458-468 are compositionally biased toward basic residues; that stretch reads PVKKPIAKKKG.

Belongs to the argininosuccinate synthase family. Type 1 subfamily. In terms of assembly, homotetramer.

The protein localises to the cytoplasm. It catalyses the reaction L-citrulline + L-aspartate + ATP = 2-(N(omega)-L-arginino)succinate + AMP + diphosphate + H(+). The protein operates within amino-acid biosynthesis; L-arginine biosynthesis; L-arginine from L-ornithine and carbamoyl phosphate: step 2/3. The polypeptide is Argininosuccinate synthase (Dechloromonas aromatica (strain RCB)).